A 417-amino-acid chain; its full sequence is Caveolae-associated protein 2 (417 aa).

A disordered region spans residues 1 to 42; that stretch reads MGEDAAQAEKFQHPNTDMLQEKPSNPSPMPSSTPSPSLNLGS. At G2 the chain carries N-acetylglycine. Residues 2–168 form an interaction with CAVIN1 region; it reads GEDAAQAEKF…IFQEESEIPA (167 aa). Residues S27, S35, S37, and S51 each carry the phosphoserine modification. 2 coiled-coil regions span residues 61-87 and 126-267; these read LLDKLVNMLDAVRENQHNMEQRQINLE and RAVR…VERR. Positions 62-100 are leucine-zipper; sequence LDKLVNMLDAVRENQHNMEQRQINLEGSVKGIQNDLTKL. A Phosphothreonine modification is found at T195. 2 disordered regions span residues 198 to 242 and 256 to 381; these read NVDL…DSLK and KLGT…ALQQ. A phosphoserine mark is found at S202, S203, and S217. The segment covering 202–218 has biased composition (acidic residues); that stretch reads SSDDELPGDEEALEDSA. The segment covering 219 to 242 has biased composition (basic and acidic residues); sequence EEKMEESRAEKIKRSSLKKVDSLK. Residues 274–286 are compositionally biased toward polar residues; sequence LTPNHQKASSGKS. Phosphoserine is present on residues S282, S283, S286, S287, S292, and S295. The segment covering 302-320 has biased composition (basic and acidic residues); it reads REGESSAENETKLEEQVQD. S326, S335, S358, and S362 each carry phosphoserine. The span at 354-365 shows a compositional bias: polar residues; sequence RGNNSGVGSNAD. T367 bears the Phosphothreonine mark. Residues 367–376 show a composition bias toward acidic residues; the sequence is TIEEDEEEES. Y387 is subject to Phosphotyrosine. A phosphoserine mark is found at S389 and S395.

Belongs to the CAVIN family. As to quaternary structure, component of the CAVIN complex composed of CAVIN1, CAVIN2, CAVIN3 and CAVIN. Interacts with CAVIN4; this augments the transactivation of NPPA by CAVIN4. Binds to PRKCA in the presence of phosphatidylserine. Interacts with CAVIN1 and CAV3. The N-terminus is blocked. In terms of processing, phosphorylated on Ser residues.

It localises to the cytoplasm. It is found in the cytosol. Its subcellular location is the membrane. The protein resides in the caveola. Its function is as follows. Plays an important role in caveolar biogenesis and morphology. Regulates caveolae morphology by inducing membrane curvature within caveolae. Plays a role in caveola formation in a tissue-specific manner. Required for the formation of caveolae in the lung and fat endothelia but not in the heart endothelia. Negatively regulates the size or stability of CAVIN complexes in the lung endothelial cells. May play a role in targeting PRKCA to caveolae. This Rattus norvegicus (Rat) protein is Caveolae-associated protein 2.